Here is a 163-residue protein sequence, read N- to C-terminus: SsrA-binding protein (163 aa).

Positions 135–156 are enriched in basic and acidic residues; the sequence is GKKEHDKRDDTKEREWKIEKSR. Residues 135-163 form a disordered region; that stretch reads GKKEHDKRDDTKEREWKIEKSRTMKHAAR.

Belongs to the SmpB family.

The protein resides in the cytoplasm. In terms of biological role, required for rescue of stalled ribosomes mediated by trans-translation. Binds to transfer-messenger RNA (tmRNA), required for stable association of tmRNA with ribosomes. tmRNA and SmpB together mimic tRNA shape, replacing the anticodon stem-loop with SmpB. tmRNA is encoded by the ssrA gene; the 2 termini fold to resemble tRNA(Ala) and it encodes a 'tag peptide', a short internal open reading frame. During trans-translation Ala-aminoacylated tmRNA acts like a tRNA, entering the A-site of stalled ribosomes, displacing the stalled mRNA. The ribosome then switches to translate the ORF on the tmRNA; the nascent peptide is terminated with the 'tag peptide' encoded by the tmRNA and targeted for degradation. The ribosome is freed to recommence translation, which seems to be the essential function of trans-translation. The chain is SsrA-binding protein from Shewanella loihica (strain ATCC BAA-1088 / PV-4).